The primary structure comprises 1140 residues: uncharacterized protein (1140 aa).

The next 2 membrane-spanning stretches (helical) occupy residues 8-28 and 1098-1118; these read FLLF…SAFT and IAIT…SGVV.

To M.pneumoniae MPN_375 (in the N-terminal section), M.pneumoniae MPN_374 (in the central section) and M.pneumoniae MPN_373 (in the C-terminal section).

It localises to the cell membrane. This is an uncharacterized protein from Mycoplasma pneumoniae (strain ATCC 29342 / M129 / Subtype 1) (Mycoplasmoides pneumoniae).